Consider the following 48-residue polypeptide: Large ribosomal subunit protein bL36c (48 aa).

It belongs to the bacterial ribosomal protein bL36 family.

It localises to the plastid. It is found in the chloroplast. The chain is Large ribosomal subunit protein bL36c from Rhodomonas salina (Cryptomonas salina).